Reading from the N-terminus, the 445-residue chain is tRNA(Ile)-lysidine synthase (445 aa).

33-38 (SGGLDS) serves as a coordination point for ATP.

This sequence belongs to the tRNA(Ile)-lysidine synthase family.

Its subcellular location is the cytoplasm. The catalysed reaction is cytidine(34) in tRNA(Ile2) + L-lysine + ATP = lysidine(34) in tRNA(Ile2) + AMP + diphosphate + H(+). Its function is as follows. Ligates lysine onto the cytidine present at position 34 of the AUA codon-specific tRNA(Ile) that contains the anticodon CAU, in an ATP-dependent manner. Cytidine is converted to lysidine, thus changing the amino acid specificity of the tRNA from methionine to isoleucine. In Pseudomonas syringae pv. tomato (strain ATCC BAA-871 / DC3000), this protein is tRNA(Ile)-lysidine synthase.